Here is a 219-residue protein sequence, read N- to C-terminus: ATP phosphoribosyltransferase (219 aa).

The protein belongs to the ATP phosphoribosyltransferase family. Short subfamily. As to quaternary structure, heteromultimer composed of HisG and HisZ subunits.

Its subcellular location is the cytoplasm. The enzyme catalyses 1-(5-phospho-beta-D-ribosyl)-ATP + diphosphate = 5-phospho-alpha-D-ribose 1-diphosphate + ATP. It functions in the pathway amino-acid biosynthesis; L-histidine biosynthesis; L-histidine from 5-phospho-alpha-D-ribose 1-diphosphate: step 1/9. Functionally, catalyzes the condensation of ATP and 5-phosphoribose 1-diphosphate to form N'-(5'-phosphoribosyl)-ATP (PR-ATP). Has a crucial role in the pathway because the rate of histidine biosynthesis seems to be controlled primarily by regulation of HisG enzymatic activity. The sequence is that of ATP phosphoribosyltransferase from Clostridium kluyveri (strain NBRC 12016).